We begin with the raw amino-acid sequence, 189 residues long: Thermostable direct hemolysin 1 (189 aa).

The N-terminal stretch at 1-24 (MKHQYFAKKSFLFISMLAAFKTSA) is a signal peptide. A disulfide bond links Cys-175 and Cys-185.

This sequence belongs to the TDH hemolysin family. Homodimer.

Functionally, bacterial hemolysins are exotoxins that attack blood cell membranes and cause cell rupture by mechanisms not clearly defined. In Vibrio parahaemolyticus serotype O3:K6 (strain RIMD 2210633), this protein is Thermostable direct hemolysin 1 (tdh1).